A 166-amino-acid chain; its full sequence is Lithostathine-1-beta (166 aa).

A signal peptide spans 1-22 (MAQTNSFFMLISSLMFLSLSQG). Thr27 is a glycosylation site (O-linked (GalNAc...) threonine). Residues 34 to 164 (ISCPEGTNAY…EKKFSFVCKF (131 aa)) enclose the C-type lectin domain. 3 disulfides stabilise this stretch: Cys36–Cys47, Cys64–Cys162, and Cys137–Cys154.

Post-translationally, all O-linked glycans consist of Gal-GlcNAc-Gal-GalNAc tetrasaccharide core and get elongated (microheterogeneity).

Its subcellular location is the secreted. Might act as an inhibitor of spontaneous calcium carbonate precipitation. May be associated with neuronal sprouting in brain, and with brain and pancreas regeneration. This is Lithostathine-1-beta (REG1B) from Homo sapiens (Human).